Reading from the N-terminus, the 106-residue chain is MANNEHVTPGEDDQQITLIDEKGNEELYQVLFTFDSEDYGKSYVLLYPASESDDQEVEIQAFSFTPDENGDASSGDLFPIDDDAEWDMVEEVLNTFLADDDSNLKD.

Belongs to the UPF0473 family.

The chain is UPF0473 protein LSEI_0788 from Lacticaseibacillus paracasei (strain ATCC 334 / BCRC 17002 / CCUG 31169 / CIP 107868 / KCTC 3260 / NRRL B-441) (Lactobacillus paracasei).